The sequence spans 241 residues: Ribosomal RNA small subunit methyltransferase G (241 aa).

S-adenosyl-L-methionine contacts are provided by residues G96, F101, 119–121 (EAS), 147–148 (VE), and R166.

The protein belongs to the methyltransferase superfamily. RNA methyltransferase RsmG family.

It localises to the cytoplasm. It catalyses the reaction guanosine(527) in 16S rRNA + S-adenosyl-L-methionine = N(7)-methylguanosine(527) in 16S rRNA + S-adenosyl-L-homocysteine. Functionally, specifically methylates the N7 position of guanine in position 527 of 16S rRNA. In Syntrophus aciditrophicus (strain SB), this protein is Ribosomal RNA small subunit methyltransferase G.